Consider the following 258-residue polypeptide: Tryptophan synthase alpha chain (258 aa).

Residues Glu-47 and Asp-58 each act as proton acceptor in the active site.

It belongs to the TrpA family. In terms of assembly, tetramer of two alpha and two beta chains.

It catalyses the reaction (1S,2R)-1-C-(indol-3-yl)glycerol 3-phosphate + L-serine = D-glyceraldehyde 3-phosphate + L-tryptophan + H2O. It participates in amino-acid biosynthesis; L-tryptophan biosynthesis; L-tryptophan from chorismate: step 5/5. The alpha subunit is responsible for the aldol cleavage of indoleglycerol phosphate to indole and glyceraldehyde 3-phosphate. This is Tryptophan synthase alpha chain from Bacillus thuringiensis subsp. konkukian (strain 97-27).